Reading from the N-terminus, the 1742-residue chain is Meiosis regulator and mRNA stability factor 1 (1742 aa).

A Phosphoserine modification is found at Ser-65. Positions 351 to 488 (IGVFWDIENC…ALLHHANELI (138 aa)) constitute an NYN domain. Disordered stretches follow at residues 620–642 (PSSAKAAPGKGSQANSGSATRNA) and 655–721 (SKTG…KEKE). Over residues 631–642 (SQANSGSATRNA) the composition is skewed to polar residues. Low complexity predominate over residues 673–689 (APPHRSSSAAAPAPKAP). Position 696 is a phosphotyrosine (Tyr-696). Ser-757 bears the Phosphoserine mark. The RRM domain maps to 788–867 (VDVQISNLDY…KKILVSLATG (80 aa)). HTH OST-type domains are found at residues 872-946 (SLSL…SPLG) and 1000-1077 (SLKT…HNKP). Ser-1089 and Ser-1091 each carry phosphoserine. HTH OST-type domains lie at 1097 to 1171 (QLIQ…LTHR), 1173 to 1247 (QVKR…CIPR), 1257 to 1332 (RTKQ…TEVE), 1333 to 1408 (RFKA…INRK), 1409 to 1484 (SLRA…CVKL), and 1486 to 1560 (SLYL…LKND). Ser-1571 bears the Phosphoserine mark. The segment at 1678–1729 (IRNENLPPDPSSPGVSAAVPAPPSPSSETPESLLSKDPTESPAKKQPKNRVK) is disordered. The segment covering 1703–1712 (SSETPESLLS) has biased composition (low complexity).

Interacts with LIMK2.

The protein localises to the peroxisome. In terms of biological role, essential regulator of oogenesis required for female meiotic progression to repress transposable elements and preventing their mobilization, which is essential for the germline integrity. Probably acts via some RNA metabolic process, equivalent to the piRNA system in males, which mediates the repression of transposable elements during meiosis by forming complexes composed of RNAs and governs the methylation and subsequent repression of transposons. Also required to protect from DNA double-strand breaks. This is Meiosis regulator and mRNA stability factor 1 from Bos taurus (Bovine).